A 148-amino-acid polypeptide reads, in one-letter code: Large ribosomal subunit protein uL15 (148 aa).

Residues 1–30 (MTHSKRNTRKLRGHVSHGHGRVGKHRKHPG) show a composition bias toward basic residues. Residues 1–38 (MTHSKRNTRKLRGHVSHGHGRVGKHRKHPGGRGMAGPE) form a disordered region.

It belongs to the universal ribosomal protein uL15 family.

This chain is Large ribosomal subunit protein uL15 (RPL27A), found in Euplotes crassus.